Here is a 94-residue protein sequence, read N- to C-terminus: MKDIYQVIKKVRISEKATMLQETTGELVFEVDRDANKIEIKKAVEVAFGKKVASVRTANYDGKLKRQRRSDAGRTAHWKKAYVKLANGETLDLV.

Belongs to the universal ribosomal protein uL23 family. As to quaternary structure, part of the 50S ribosomal subunit. Contacts protein L29, and trigger factor when it is bound to the ribosome.

Its function is as follows. One of the early assembly proteins it binds 23S rRNA. One of the proteins that surrounds the polypeptide exit tunnel on the outside of the ribosome. Forms the main docking site for trigger factor binding to the ribosome. The sequence is that of Large ribosomal subunit protein uL23 from Akkermansia muciniphila (strain ATCC BAA-835 / DSM 22959 / JCM 33894 / BCRC 81048 / CCUG 64013 / CIP 107961 / Muc).